A 268-amino-acid chain; its full sequence is MKVLNLNVFRGFHTQFHSVYKWENRRDLIINLIEAENPDIILFQECNKLQNTEDMEKFMEDLPNYDYVIKYSLPGVFRSRALIIAYNPNKLIKNSEIVKWFSDTPDVPSIGWGNPDDDFGRIILGCEFLEKNSDKKFWIFNVHFDIDVESIRKSILLLPELIDKQCLSDSKIILAGDFNTDDKLLFDTLKNNNFDRLSQTFNTTDKVKLNVSFVGKRDNFGKLTEDLYLDHVFGREVYNYNIYCPFEYDFIINKYIVSDHLPVVIIFE.

This is an uncharacterized protein from Acanthamoeba polyphaga mimivirus (APMV).